A 496-amino-acid polypeptide reads, in one-letter code: MEPFTIFSLVVASLVFFACWALVAPNTSKNLPPGPPKLPIIGNIHQLKSPTPHRVLKDLAKKYGPIMHLQLGQVSTVVVSTPRLAQEIMKTNDISFADRPTTTTSQIFFYKAQDIGWAPYGEYWRQMKKICTLELLSAKKVRSFSSIREEELTRIRKILEFKAGTPINYTEMTIEMVNNVICKATLGDCCKDQALLIELLYDVLKTLSAFNLASYYPRLQFLNVISGKKAKWLKMQKRLDDIMEDILKEHRAKGRAKNSDQEDLVDVLLRIKDTGGLDINVTDEHVKAVVLDMLTAGTDTSSTTLEWAMTELMRNPDMMKRAQEEVRSVVKGEHVTETDLQSLHYLKLIVKETMRLHAPTPLLVPRECRQDCNVDGYDIPAKTKVLVNAWACGVDPGSWENPDSFIPERFENSSINFMGADFQYIPFGAGRRICPGLTFGLSMVEYPLAHFLYHFDWKLPYGMKPHELDITEITTISTSLKHHLKIVPFPKSSLAK.

Residues 4-24 (FTIFSLVVASLVFFACWALVA) form a helical; Signal-anchor for type II membrane protein membrane-spanning segment. N-linked (GlcNAc...) asparagine glycans are attached at residues N26, N168, N280, and N412. C434 contributes to the heme binding site.

This sequence belongs to the cytochrome P450 family. It depends on heme as a cofactor. As to expression, expressed in floral glandular trichomes.

It is found in the membrane. The enzyme catalyses germacra-1(10),4,11(13)-trien-12-oate + reduced [NADPH--hemoprotein reductase] + O2 = (+)-costunolide + oxidized [NADPH--hemoprotein reductase] + 2 H2O. Its pathway is secondary metabolite biosynthesis; terpenoid biosynthesis. In terms of biological role, involved in the biosynthesis of germacrene-derived sesquiterpene lactones. Component of the parthenolide biosynthetic pathway; parthenolide and conjugates are promising anti-cancer drugs highly active against colon cancer cells. Hydroxylates germacrene A acid to 6-alpha-hydroxy-germacrene A acid, a precursor of sesquiterpene lactones that spontaneously undergoes a lactonization which yields costunolide. This is Costunolide synthase from Tanacetum parthenium (Feverfew).